A 281-amino-acid polypeptide reads, in one-letter code: Imidazole glycerol phosphate synthase subunit HisF (281 aa).

Catalysis depends on residues Asp12 and Asp131. Positions 256–281 are disordered; the sequence is VRQAEPLPQPAREGLGDSARRAMSSG.

It belongs to the HisA/HisF family. As to quaternary structure, heterodimer of HisH and HisF.

The protein resides in the cytoplasm. The catalysed reaction is 5-[(5-phospho-1-deoxy-D-ribulos-1-ylimino)methylamino]-1-(5-phospho-beta-D-ribosyl)imidazole-4-carboxamide + L-glutamine = D-erythro-1-(imidazol-4-yl)glycerol 3-phosphate + 5-amino-1-(5-phospho-beta-D-ribosyl)imidazole-4-carboxamide + L-glutamate + H(+). Its pathway is amino-acid biosynthesis; L-histidine biosynthesis; L-histidine from 5-phospho-alpha-D-ribose 1-diphosphate: step 5/9. In terms of biological role, IGPS catalyzes the conversion of PRFAR and glutamine to IGP, AICAR and glutamate. The HisF subunit catalyzes the cyclization activity that produces IGP and AICAR from PRFAR using the ammonia provided by the HisH subunit. This is Imidazole glycerol phosphate synthase subunit HisF from Thermosynechococcus vestitus (strain NIES-2133 / IAM M-273 / BP-1).